A 596-amino-acid polypeptide reads, in one-letter code: Arginine--tRNA ligase (596 aa).

Residues 135–145 (ANPTGPIHIGG) carry the 'HIGH' region motif. The disordered stretch occupies residues 227–249 (PRVDGGADQDGNPLGEGDSEQRE).

This sequence belongs to the class-I aminoacyl-tRNA synthetase family. In terms of assembly, monomer.

It localises to the cytoplasm. The catalysed reaction is tRNA(Arg) + L-arginine + ATP = L-arginyl-tRNA(Arg) + AMP + diphosphate. The chain is Arginine--tRNA ligase from Bifidobacterium adolescentis (strain ATCC 15703 / DSM 20083 / NCTC 11814 / E194a).